The primary structure comprises 134 residues: Complexin-2 (134 aa).

The tract at residues 1–114 is disordered; sequence MDFVMKQALG…CGDEEEEEEE (114 aa). The segment covering 15–85 has biased composition (basic and acidic residues); the sequence is DMGKMLGGEE…EEKEAEEKAA (71 aa). The stretch at 28–84 forms a coiled coil; the sequence is PDAQKKEEERQEALRQQEEERKAKHARMEAEREKVRQQIRDKYGLKKKEEKEAEEKA. The segment at 41–97 is interaction with the SNARE complex; it reads LRQQEEERKAKHARMEAEREKVRQQIRDKYGLKKKEEKEAEEKAALEQPCEGSLTRP. The residue at position 93 (S93) is a Phosphoserine.

The protein belongs to the complexin/synaphin family. Binds to the SNARE core complex containing SNAP25, VAMP2 and STX1A. In terms of tissue distribution, nervous system. Also present in adrenal chromaffin cells (at protein level).

It is found in the cytoplasm. The protein resides in the cytosol. Its subcellular location is the presynapse. The protein localises to the nucleus. It localises to the perikaryon. In terms of biological role, negatively regulates the formation of synaptic vesicle clustering at active zone to the presynaptic membrane in postmitotic neurons. Positively regulates a late step in exocytosis of various cytoplasmic vesicles, such as synaptic vesicles and other secretory vesicles. Also involved in mast cell exocytosis. This chain is Complexin-2 (CPLX2), found in Bos taurus (Bovine).